We begin with the raw amino-acid sequence, 367 residues long: Flagellar P-ring protein (367 aa).

The signal sequence occupies residues 1–21; the sequence is MYVFKALAGIVLALVATLAHA.

This sequence belongs to the FlgI family. As to quaternary structure, the basal body constitutes a major portion of the flagellar organelle and consists of four rings (L,P,S, and M) mounted on a central rod.

The protein localises to the periplasm. The protein resides in the bacterial flagellum basal body. In terms of biological role, assembles around the rod to form the L-ring and probably protects the motor/basal body from shearing forces during rotation. This chain is Flagellar P-ring protein, found in Salmonella paratyphi C (strain RKS4594).